A 157-amino-acid polypeptide reads, in one-letter code: Snaclec EMS16 subunit alpha (157 aa).

Positions 1-23 (MGRFISVSFGLLVVFLSLSGTGA) are cleaved as a signal peptide. Cystine bridges form between cysteine 27-cysteine 38, cysteine 55-cysteine 152, and cysteine 127-cysteine 144. The C-type lectin domain maps to 34–153 (YDQHCYLAIG…CEDLYPFVCK (120 aa)).

This sequence belongs to the snaclec family. As to quaternary structure, heterodimer of subunits A and B; disulfide-linked. Expressed by the venom gland.

The protein resides in the secreted. In terms of biological role, EMS16 is a potent and selective inhibitor of alpha-2/beta-1 (ITGA2/ITGB1) integrin and acts as a potent antagonist of platelet aggregation and cell migration. Binds specifically to the I domain of the alpha-2 subunit, in a metal ion-independent fashion. This chain is Snaclec EMS16 subunit alpha, found in Echis multisquamatus (Central Asian sand viper).